We begin with the raw amino-acid sequence, 539 residues long: Putative cysteine ligase BshC (539 aa).

Residues Ser146 and 384-386 (ERH) contribute to the ADP site. The stretch at 455 to 475 (LLKNAAFIQDQLQFLERTVMK) forms a coiled coil. Residues 490–493 (RIQN), Trp506, and Tyr510 each bind ADP.

This sequence belongs to the BshC family. Homodimer in solution.

Involved in bacillithiol (BSH) biosynthesis. May catalyze the last step of the pathway, the addition of cysteine to glucosamine malate (GlcN-Mal) to generate BSH. This chain is Putative cysteine ligase BshC, found in Bacillus subtilis (strain 168).